The chain runs to 531 residues: Beta-hexosaminidase subunit beta (531 aa).

A signal peptide spans 1–24 (MRHRGLGLAALLALLAAVAPRSSA). N50 carries N-linked (GlcNAc...) asparagine glycosylation. C65 and C111 are joined by a disulfide. N-linked (GlcNAc...) asparagine glycosylation is found at N116, N164, and N301. Disulfide bonds link C283–C334 and C508–C525. The Proton donor role is filled by E329.

Belongs to the glycosyl hydrolase 20 family. There are 3 forms of beta-hexosaminidase: hexosaminidase A is a heterodimer composed of one subunit alpha and one subunit beta (chain A and B); hexosaminidase B is a homodimer of two beta subunits (two chains A and B); hexosaminidase S is a homodimer of two alpha subunits. The composition of the dimer (isozyme A versus isozyme S) has a significant effect on the substrate specificity of the alpha subunit active site.

It is found in the lysosome. The protein resides in the cytoplasmic vesicle. It localises to the secretory vesicle. Its subcellular location is the cortical granule. The enzyme catalyses Hydrolysis of terminal non-reducing N-acetyl-D-hexosamine residues in N-acetyl-beta-D-hexosaminides.. It catalyses the reaction N-acetyl-beta-D-galactosaminyl-(1-&gt;4)-beta-D-3-sulfogalactosyl-(1-&gt;4)-beta-D-glucosyl-(1&lt;-&gt;1')-ceramide + H2O = a beta-D-3-sulfogalactosyl-(1-&gt;4)-beta-D-glucosyl-(1&lt;-&gt;1')-ceramide + N-acetyl-beta-D-galactosamine. It carries out the reaction a ganglioside GM2 (d18:1(4E)) + H2O = a ganglioside GM3 (d18:1(4E)) + N-acetyl-beta-D-galactosamine. The catalysed reaction is a ganglioside GM2 + H2O = a ganglioside GM3 + N-acetyl-beta-D-galactosamine. The enzyme catalyses beta-D-GalNAc-(1-&gt;4)-alpha-L-IdoA-(1-&gt;3)-beta-D-GalNAc-4-sulfate-(1-&gt;4)-alpha-L-IdoA-(1-&gt;3)-D-GalNAc-4-sulfate + H2O = alpha-L-IdoA-(1-&gt;3)-beta-D-GalNAc-4-sulfate-(1-&gt;4)-alpha-L-IdoA-(1-&gt;3)-D-GalNAc-4-sulfate + N-acetyl-D-galactosamine. It catalyses the reaction N-acetyl-beta-D-6-sulfogalactosaminyl-(1-&gt;4)-alpha-L-iduronyl-(1-&gt;3)-N-acetyl-D-6-sulfogalactosamine + H2O = alpha-L-iduronyl-(1-&gt;3)-N-acetyl-D-6-sulfogalactosamine + N-acetyl-D-6-sulfogalactosamine. Its activity is regulated as follows. Addition of GM2A stimulates the hydrolysis of sulfated glycosphingolipid SM2 and the ganglioside GM2. Its function is as follows. Hydrolyzes the non-reducing end N-acetyl-D-hexosamine and/or sulfated N-acetyl-D-hexosamine of glycoconjugates, such as the oligosaccharide moieties from proteins and neutral glycolipids, or from certain mucopolysaccharides. The isozyme B does not hydrolyze each of these substrates, however hydrolyzes efficiently neutral oligosaccharide. Only the isozyme A is responsible for the degradation of GM2 gangliosides in the presence of GM2A. During fertilization is responsible, at least in part, for the zona block to polyspermy. Present in the cortical granules of non-activated oocytes, is exocytosed during the cortical reaction in response to oocyte activation and inactivates the sperm galactosyltransferase-binding site, accounting for the block in sperm binding to the zona pellucida. The polypeptide is Beta-hexosaminidase subunit beta (Felis catus (Cat)).